The following is a 1892-amino-acid chain: Kinesin-like protein KIN-12E (1892 aa).

Residues 1–28 (MAGHGAGGRRASTSRAAARRVEAETNEN) are disordered. The Kinesin motor domain maps to 64 to 401 (NVQVLIRIRP…LKFAQRAKLI (338 aa)). Position 145–152 (145–152 (GQTGSGKT)) interacts with ATP. 5 coiled-coil regions span residues 406-438 (KVNEDASGDVMSLQRQIEDLKDQLTCLKKQQNM), 486-526 (SLRR…TTVK), 1066-1139 (LFSN…LHEQ), 1303-1357 (KLLQ…LAEN), and 1396-1528 (ISET…SYQI). A compositionally biased stretch (basic and acidic residues) spans 1633 to 1649 (LHESNSDTGHTKFEKPS). A disordered region spans residues 1633-1656 (LHESNSDTGHTKFEKPSGRTRGSG). Residues 1780 to 1841 (MDQRKADLLE…LVGSNQAIAE (62 aa)) adopt a coiled-coil conformation. Residues 1870 to 1892 (HARHEHSRLQAAKSSRTRRGSHQ) form a disordered region.

This sequence belongs to the TRAFAC class myosin-kinesin ATPase superfamily. Kinesin family. KIN-12 subfamily.

In Oryza sativa subsp. japonica (Rice), this protein is Kinesin-like protein KIN-12E.